The chain runs to 490 residues: UDP-N-acetylmuramate--L-alanine ligase (490 aa).

Residue 130 to 136 coordinates ATP; sequence GTHGKTT.

The protein belongs to the MurCDEF family.

It is found in the cytoplasm. It catalyses the reaction UDP-N-acetyl-alpha-D-muramate + L-alanine + ATP = UDP-N-acetyl-alpha-D-muramoyl-L-alanine + ADP + phosphate + H(+). It functions in the pathway cell wall biogenesis; peptidoglycan biosynthesis. Cell wall formation. The sequence is that of UDP-N-acetylmuramate--L-alanine ligase from Idiomarina loihiensis (strain ATCC BAA-735 / DSM 15497 / L2-TR).